Reading from the N-terminus, the 168-residue chain is Photosystem I assembly protein Ycf3 (168 aa).

3 TPR repeats span residues 35-68 (AFTY…EIDP), 72-105 (SYIL…NPFL), and 120-153 (GEQA…TPGN).

Belongs to the Ycf3 family.

The protein resides in the plastid. It is found in the chloroplast thylakoid membrane. Essential for the assembly of the photosystem I (PSI) complex. May act as a chaperone-like factor to guide the assembly of the PSI subunits. This Oenothera elata subsp. hookeri (Hooker's evening primrose) protein is Photosystem I assembly protein Ycf3.